Consider the following 406-residue polypeptide: Probable endo-xylogalacturonan hydrolase A (406 aa).

The first 18 residues, 1-18 (MTLYRNLLLLASLGLSYA), serve as a signal peptide directing secretion. Residue Asn84 is glycosylated (N-linked (GlcNAc...) asparagine). PbH1 repeat units follow at residues 183-213 (ATNVVFSNLKMDANSKSDNPPKNTDGFDIGE) and 214-235 (STYVTITEVTVVNDDDCVALKP). Catalysis depends on Asp228, which acts as the Proton donor. His251 is a catalytic residue. 3 PbH1 repeats span residues 266–289 (VKNIYVTGATMINSTKAAGIKTYP), 299–320 (VSNVTFTDFTVDNSDYAFQIQS), and 333–375 (PGNA…SISG). 2 N-linked (GlcNAc...) asparagine glycosylation sites follow: Asn278 and Asn301.

This sequence belongs to the glycosyl hydrolase 28 family.

Its subcellular location is the secreted. In terms of biological role, pectinolytic enzyme involved in the degradation of xylogalacturonan (xga), a galacturonan backbone heavily substituted with xylose, and which is one important component of the hairy regions of pectin. Activity requires a galacturonic acid backbone substituted with xylose. This is Probable endo-xylogalacturonan hydrolase A (xghA) from Aspergillus niger (strain ATCC MYA-4892 / CBS 513.88 / FGSC A1513).